Reading from the N-terminus, the 146-residue chain is Large ribosomal subunit protein uL15 (146 aa).

Residues 1-18 (MKLHELKPSEGSRKERNR) show a composition bias toward basic and acidic residues. Positions 1 to 50 (MKLHELKPSEGSRKERNRVGRGTGSGNGKTSGRGHKGQKARSGGGVRLGF) are disordered. Gly residues predominate over residues 21 to 31 (RGTGSGNGKTS).

It belongs to the universal ribosomal protein uL15 family. As to quaternary structure, part of the 50S ribosomal subunit.

Binds to the 23S rRNA. The protein is Large ribosomal subunit protein uL15 of Listeria welshimeri serovar 6b (strain ATCC 35897 / DSM 20650 / CCUG 15529 / CIP 8149 / NCTC 11857 / SLCC 5334 / V8).